The following is a 571-amino-acid chain: 2-succinyl-5-enolpyruvyl-6-hydroxy-3-cyclohexene-1-carboxylate synthase (571 aa).

This sequence belongs to the TPP enzyme family. MenD subfamily. In terms of assembly, homodimer. Requires Mg(2+) as cofactor. It depends on Mn(2+) as a cofactor. Thiamine diphosphate is required as a cofactor.

It catalyses the reaction isochorismate + 2-oxoglutarate + H(+) = 5-enolpyruvoyl-6-hydroxy-2-succinyl-cyclohex-3-ene-1-carboxylate + CO2. The protein operates within quinol/quinone metabolism; 1,4-dihydroxy-2-naphthoate biosynthesis; 1,4-dihydroxy-2-naphthoate from chorismate: step 2/7. It participates in quinol/quinone metabolism; menaquinone biosynthesis. Its function is as follows. Catalyzes the thiamine diphosphate-dependent decarboxylation of 2-oxoglutarate and the subsequent addition of the resulting succinic semialdehyde-thiamine pyrophosphate anion to isochorismate to yield 2-succinyl-5-enolpyruvyl-6-hydroxy-3-cyclohexene-1-carboxylate (SEPHCHC). In Lysinibacillus sphaericus (strain C3-41), this protein is 2-succinyl-5-enolpyruvyl-6-hydroxy-3-cyclohexene-1-carboxylate synthase.